A 185-amino-acid polypeptide reads, in one-letter code: Potassium-transporting ATPase KdpC subunit 2 (185 aa).

Residues 8–28 (LGLVLIMFVLCGFIFPLTVTA) form a helical membrane-spanning segment.

The protein belongs to the KdpC family. The system is composed of three essential subunits: KdpA, KdpB and KdpC.

It is found in the cell membrane. The protein resides in the membrane raft. Part of the high-affinity ATP-driven potassium transport (or Kdp) system, which catalyzes the hydrolysis of ATP coupled with the electrogenic transport of potassium into the cytoplasm. This subunit acts as a catalytic chaperone that increases the ATP-binding affinity of the ATP-hydrolyzing subunit KdpB by the formation of a transient KdpB/KdpC/ATP ternary complex. This is Potassium-transporting ATPase KdpC subunit 2 from Staphylococcus aureus (strain Mu50 / ATCC 700699).